A 414-amino-acid polypeptide reads, in one-letter code: Tryptophan synthase beta chain (414 aa).

At Lys108 the chain carries N6-(pyridoxal phosphate)lysine.

This sequence belongs to the TrpB family. Tetramer of two alpha and two beta chains. Pyridoxal 5'-phosphate is required as a cofactor.

The enzyme catalyses (1S,2R)-1-C-(indol-3-yl)glycerol 3-phosphate + L-serine = D-glyceraldehyde 3-phosphate + L-tryptophan + H2O. Its pathway is amino-acid biosynthesis; L-tryptophan biosynthesis; L-tryptophan from chorismate: step 5/5. Functionally, the beta subunit is responsible for the synthesis of L-tryptophan from indole and L-serine. The sequence is that of Tryptophan synthase beta chain from Beijerinckia indica subsp. indica (strain ATCC 9039 / DSM 1715 / NCIMB 8712).